A 356-amino-acid chain; its full sequence is MPVQPSPVVMGIETSCDETGVALVRDGVLLGDALSTSMDQHARYGGVVPEIAARAHVQALVPCVRAALASAGLTAADIGAVAVTAGPGLATALHVGVSAAKAYATALDVPFYGVHHLAGHLAADLVDGEPLPDPLIALIVSGGHTSLLRVGDLARDPIVHLGDTLDDAAGECFDKVARVLGLPYPGGPAVDREAVGNDPAALAFPRPLTGRTDSPYTFSFSGLKTAVARWVEAHPDSTVPAGDVIASFQEAVVDVLTAKAIRACRDHEIGDLLIVGGVAANSRLRALAAQRCEAAGLRLRIPARKRCTDNGVMIAALGDLLVRSGAAPSRPDLAAMPGAFLDQAQLGVVQPTQRAA.

Fe cation is bound by residues His-116 and His-120. Residues 139–143 (IVSGG), Asp-174, Gly-187, Asp-191, and Asn-281 each bind substrate. Residue Asp-309 participates in Fe cation binding.

The protein belongs to the KAE1 / TsaD family. Fe(2+) is required as a cofactor.

The protein resides in the cytoplasm. It carries out the reaction L-threonylcarbamoyladenylate + adenosine(37) in tRNA = N(6)-L-threonylcarbamoyladenosine(37) in tRNA + AMP + H(+). Its function is as follows. Required for the formation of a threonylcarbamoyl group on adenosine at position 37 (t(6)A37) in tRNAs that read codons beginning with adenine. Is involved in the transfer of the threonylcarbamoyl moiety of threonylcarbamoyl-AMP (TC-AMP) to the N6 group of A37, together with TsaE and TsaB. TsaD likely plays a direct catalytic role in this reaction. The chain is tRNA N6-adenosine threonylcarbamoyltransferase from Frankia alni (strain DSM 45986 / CECT 9034 / ACN14a).